Consider the following 93-residue polypeptide: Small ribosomal subunit protein uS19c (93 aa).

This sequence belongs to the universal ribosomal protein uS19 family.

Its subcellular location is the plastid. The protein localises to the chloroplast. Functionally, protein S19 forms a complex with S13 that binds strongly to the 16S ribosomal RNA. The protein is Small ribosomal subunit protein uS19c of Oryza nivara (Indian wild rice).